Reading from the N-terminus, the 1464-residue chain is Collagen alpha-1(I) chain (1464 aa).

The signal sequence occupies residues Met-1 to Gly-22. Positions Gln-23–Pro-161 are cleaved as a propeptide — N-terminal propeptide. A VWFC domain is found at Ile-38–Pro-96. Positions Gly-98–Arg-1214 are disordered. The span at Pro-138–Pro-153 shows a compositional bias: pro residues. At Gln-162 the chain carries Pyrrolidone carboxylic acid. The tract at residues Gln-162–Pro-178 is nonhelical region (N-terminal). Residue Lys-170 is modified to Allysine. Position 171 is a phosphoserine (Ser-171). The triple-helical region stretch occupies residues Gly-179 to Pro-1192. 4-hydroxyproline occurs at positions 190, 193, 196, 205, 208, 211, 226, 241, 247, 256, and 262. The segment covering Pro-198 to Met-217 has biased composition (low complexity). Over residues Asn-229–Glu-243 the composition is skewed to basic and acidic residues. Lys-265 carries the 5-hydroxylysine; alternate modification. A glycan (O-linked (Gal...) hydroxylysine; alternate) is linked at Lys-265. Ser-271 is modified (phosphoserine). The span at Asp-279–Asn-295 shows a compositional bias: low complexity. 4-hydroxyproline occurs at positions 289, 292, 298, 307, and 313. Residues Pro-318–Ala-331 show a composition bias toward low complexity. Pro residues predominate over residues Pro-333–Phe-345. 4-hydroxyproline is present on residues Pro-334, Pro-343, Pro-346, Pro-373, Pro-376, Pro-388, Pro-394, Pro-403, Pro-409, Pro-412, and Pro-427. Residues Ala-379–Ser-418 are compositionally biased toward low complexity. Position 430 is a 5-hydroxylysine (Lys-430). Pro-436, Pro-439, Pro-451, Pro-460, Pro-475, Pro-481, Pro-490, and Pro-496 each carry 4-hydroxyproline. Positions Lys-448–Gln-457 are enriched in low complexity. The segment covering Gly-485–Gly-494 has biased composition (gly residues). Residue Lys-505 is modified to 5-hydroxylysine. 28 positions are modified to 4-hydroxyproline: Pro-514, Pro-523, Pro-529, Pro-535, Pro-544, Pro-547, Pro-556, Pro-565, Pro-571, Pro-583, Pro-592, Pro-601, Pro-604, Pro-622, Pro-640, Pro-646, Pro-652, Pro-658, Pro-664, Pro-670, Pro-682, Pro-691, Pro-703, Pro-715, Pro-718, Pro-724, Pro-730, and Pro-739. Low complexity predominate over residues Lys-538 to Arg-564. Residues Ala-573–Pro-592 show a composition bias toward low complexity. Residues Gln-634–Gln-661 show a composition bias toward low complexity. A compositionally biased stretch (low complexity) spans Pro-696–Pro-724. Positions Arg-745 to Asp-747 match the Cell attachment site motif. Residue Lys-751 is modified to 5-hydroxylysine. 4-hydroxyproline occurs at positions 757, 772, and 778. The segment covering Ser-784–Ala-798 has biased composition (low complexity). Ser-787 carries the post-translational modification Phosphoserine. A 4-hydroxyproline mark is found at Pro-799, Pro-805, Pro-808, Pro-817, Pro-823, Pro-841, Pro-850, and Pro-859. Positions Ala-811 to Ala-838 are enriched in low complexity. Positions Pro-840–Pro-852 are enriched in pro residues. Positions Ile-853–Val-883 are enriched in low complexity. Lys-862 bears the 5-hydroxylysine mark. Pro-871 and Pro-877 each carry 4-hydroxyproline. Pro-885 is modified (3-hydroxyproline). 16 positions are modified to 4-hydroxyproline: Pro-886, Pro-895, Pro-898, Pro-919, Pro-928, Pro-937, Pro-946, Pro-964, Pro-973, Pro-976, Pro-982, Pro-997, Pro-1003, Pro-1009, Pro-1018, and Pro-1024. Residues Glu-912–Glu-921 are compositionally biased toward low complexity. Residues Ala-931–Ala-955 show a composition bias toward low complexity. The span at Pro-996–Ala-1006 shows a compositional bias: pro residues. Lys-1033 bears the 5-hydroxylysine mark. The span at Ala-1042 to Val-1057 shows a compositional bias: pro residues. A 4-hydroxyproline mark is found at Pro-1045, Pro-1048, and Pro-1051. Residues Val-1078–Pro-1092 are compositionally biased toward low complexity. The short motif at Arg-1093 to Asp-1095 is the Cell attachment site element. Basic and acidic residues predominate over residues Arg-1093 to Ile-1107. Lys-1096 is modified (5-hydroxylysine). Lys-1108 bears the 5-hydroxylysine; alternate mark. Lys-1108 is a glycosylation site (O-linked (Gal...) hydroxylysine; alternate). 5 positions are modified to 4-hydroxyproline: Pro-1120, Pro-1123, Pro-1126, Pro-1144, and Pro-1159. Low complexity predominate over residues Pro-1126–Pro-1159. Pro-1164 is subject to 3-hydroxyproline. At Pro-1165 the chain carries 4-hydroxyproline. Positions Val-1177 to Pro-1192 are enriched in pro residues. A 3-hydroxyproline modification is found at Pro-1179. The residue at position 1180 (Pro-1180) is a 4-hydroxyproline. The residue at position 1182 (Pro-1182) is a 3-hydroxyproline. Residue Pro-1183 is modified to 4-hydroxyproline. Residue Pro-1185 is modified to 3-hydroxyproline. A 4-hydroxyproline mark is found at Pro-1186, Pro-1189, and Pro-1192. Positions Ser-1193–Ala-1218 are nonhelical region (C-terminal). Residue Lys-1208 is modified to Allysine. The propeptide at Asp-1219–Leu-1464 is C-terminal propeptide. Residues Leu-1229–Leu-1464 form the Fibrillar collagen NC1 domain. Intrachain disulfides connect Cys-1259-Cys-1291, Cys-1299-Cys-1462, and Cys-1370-Cys-1415. 5 residues coordinate Ca(2+): Asp-1277, Asn-1279, Gln-1280, Cys-1282, and Asp-1285. A glycan (N-linked (GlcNAc...) asparagine) is linked at Asn-1365.

This sequence belongs to the fibrillar collagen family. Trimers of one alpha 2(I) and two alpha 1(I) chains. Interacts with MRC2. Interacts with TRAM2. Interacts with MFAP4 in a Ca (2+)-dependent manner. Contains mostly 4-hydroxyproline. Proline residues at the third position of the tripeptide repeating unit (G-X-Y) are hydroxylated in some or all of the chains. In terms of processing, contains 3-hydroxyproline at a few sites. This modification occurs on the first proline residue in the sequence motif Gly-Pro-Hyp, where Hyp is 4-hydroxyproline. Post-translationally, lysine residues at the third position of the tripeptide repeating unit (G-X-Y) are 5-hydroxylated in some or all of the chains. O-glycosylated on hydroxylated lysine residues. The O-linked glycan consists of a Glc-Gal disaccharide. As to expression, forms the fibrils of tendon, ligaments and bones. In bones the fibrils are mineralized with calcium hydroxyapatite.

It localises to the secreted. It is found in the extracellular space. The protein resides in the extracellular matrix. Functionally, type I collagen is a member of group I collagen (fibrillar forming collagen). The chain is Collagen alpha-1(I) chain (COL1A1) from Homo sapiens (Human).